Here is a 286-residue protein sequence, read N- to C-terminus: NADH-cytochrome b5 reductase 1 (286 aa).

A helical membrane pass occupies residues 6 to 26; that stretch reads FILVIIGSVALAAGVKYVFTL. The region spanning 52 to 155 is the FAD-binding FR-type domain; it reads QEYRKFQLKE…KGPKGKFNYQ (104 aa). Residues 135-150 and 161-193 each bind FAD; these read DNMF…GPKG and SIGM…EISL.

Belongs to the flavoprotein pyridine nucleotide cytochrome reductase family. In terms of assembly, monomer. The cofactor is FAD.

Its subcellular location is the endoplasmic reticulum membrane. The protein resides in the mitochondrion outer membrane. The catalysed reaction is 2 Fe(III)-[cytochrome b5] + NADH = 2 Fe(II)-[cytochrome b5] + NAD(+) + H(+). Functionally, electron donor reductase for cytochrome b5. The cytochrome b5/NADH cytochrome b5 reductase electron transfer system supports the catalytic activity of several sterol biosynthetic enzymes. The chain is NADH-cytochrome b5 reductase 1 (cyb5r1) from Dictyostelium discoideum (Social amoeba).